A 458-amino-acid chain; its full sequence is ATP synthase subunit beta (458 aa).

G148–T155 serves as a coordination point for ATP.

It belongs to the ATPase alpha/beta chains family. F-type ATPases have 2 components, CF(1) - the catalytic core - and CF(0) - the membrane proton channel. CF(1) has five subunits: alpha(3), beta(3), gamma(1), delta(1), epsilon(1). CF(0) has three main subunits: a(1), b(2) and c(9-12). The alpha and beta chains form an alternating ring which encloses part of the gamma chain. CF(1) is attached to CF(0) by a central stalk formed by the gamma and epsilon chains, while a peripheral stalk is formed by the delta and b chains.

The protein localises to the cell inner membrane. The catalysed reaction is ATP + H2O + 4 H(+)(in) = ADP + phosphate + 5 H(+)(out). In terms of biological role, produces ATP from ADP in the presence of a proton gradient across the membrane. The catalytic sites are hosted primarily by the beta subunits. The polypeptide is ATP synthase subunit beta (Ectopseudomonas mendocina (strain ymp) (Pseudomonas mendocina)).